Reading from the N-terminus, the 360-residue chain is Phospho-N-acetylmuramoyl-pentapeptide-transferase (360 aa).

10 helical membrane-spanning segments follow: residues 26–46, 74–94, 97–117, 132–152, 168–188, 199–219, 236–256, 263–283, 288–308, and 338–358; these read AILG…KLIE, MGGL…GDLG, YVWV…IDDY, WKYI…YTTA, VMPQ…VGSS, GLAI…AYLS, SGEL…FLWF, VFMG…IAVL, ILLV…ILQV, and VIVR…ATLK.

The protein belongs to the glycosyltransferase 4 family. MraY subfamily. The cofactor is Mg(2+).

The protein resides in the cell inner membrane. The enzyme catalyses UDP-N-acetyl-alpha-D-muramoyl-L-alanyl-gamma-D-glutamyl-meso-2,6-diaminopimeloyl-D-alanyl-D-alanine + di-trans,octa-cis-undecaprenyl phosphate = di-trans,octa-cis-undecaprenyl diphospho-N-acetyl-alpha-D-muramoyl-L-alanyl-D-glutamyl-meso-2,6-diaminopimeloyl-D-alanyl-D-alanine + UMP. It functions in the pathway cell wall biogenesis; peptidoglycan biosynthesis. Its function is as follows. Catalyzes the initial step of the lipid cycle reactions in the biosynthesis of the cell wall peptidoglycan: transfers peptidoglycan precursor phospho-MurNAc-pentapeptide from UDP-MurNAc-pentapeptide onto the lipid carrier undecaprenyl phosphate, yielding undecaprenyl-pyrophosphoryl-MurNAc-pentapeptide, known as lipid I. In Shewanella sp. (strain ANA-3), this protein is Phospho-N-acetylmuramoyl-pentapeptide-transferase.